The following is a 398-amino-acid chain: uncharacterized protein (398 aa).

The signal sequence occupies residues 1–21 (MRKVGITLSVVALVIMGFVAG). C22 carries the N-acetylcysteine modification. C22 carries S-archaeol cysteine lipidation.

Belongs to the BMP lipoprotein family.

Its subcellular location is the cell membrane. This is an uncharacterized protein from Pyrococcus furiosus (strain ATCC 43587 / DSM 3638 / JCM 8422 / Vc1).